The primary structure comprises 678 residues: Protein MALE DISCOVERER 2 (678 aa).

A signal peptide spans 1–25 (MMGCGFHFPWFFFLIIGLQAPLSLS). The Extracellular segment spans residues 26–323 (LTSQGSALLK…SKGSKHVWLY (298 aa)). The N-linked (GlcNAc...) asparagine glycan is linked to Asn52. 4 LRR repeats span residues 71–94 (KVQILDLSGYSLEGTLAPELSQLS), 95–117 (DLRSLILSRNHFSGGIPKEYGSF), 119–141 (NLEVLDLRENDLSGQIPPELSNG), and 143–164 (SLKHLLLSGNKFSDDMRIKIVR). Residues 247–314 (LAAEPAPSAP…KNQPQDNKQS (68 aa)) are disordered. Over residues 296–311 (KGSTSPDISKNQPQDN) the composition is skewed to polar residues. Residues 324-344 (VVIAVASFVGLLIIVAVIFFC) traverse the membrane as a helical segment. The Cytoplasmic portion of the chain corresponds to 345–678 (RKRAVKSIGP…ELEILSSEAT (334 aa)). The Protein kinase domain maps to 346-651 (KRAVKSIGPW…DVAEQLKQVI (306 aa)).

It belongs to the protein kinase superfamily. Ser/Thr protein kinase family. In terms of tissue distribution, expressed in pollen tubes and seedlings.

The protein resides in the endomembrane system. It catalyses the reaction L-seryl-[protein] + ATP = O-phospho-L-seryl-[protein] + ADP + H(+). The catalysed reaction is L-threonyl-[protein] + ATP = O-phospho-L-threonyl-[protein] + ADP + H(+). Functionally, involved in the pollen tube perception of the female signal by binding an unidentified female attractant. May be involved in the regulation of root hairs development. This is Protein MALE DISCOVERER 2 (MDIS2) from Arabidopsis thaliana (Mouse-ear cress).